The chain runs to 715 residues: Elongation factor G (715 aa).

One can recognise a tr-type G domain in the interval 12 to 309 (RRVRNIGIMA…GVIDYLPSPL (298 aa)). Residues 21 to 28 (AHIDAGKT), 108 to 112 (DTPGH), and 162 to 165 (NKMD) each bind GTP.

It belongs to the TRAFAC class translation factor GTPase superfamily. Classic translation factor GTPase family. EF-G/EF-2 subfamily.

Its subcellular location is the cytoplasm. Its function is as follows. Catalyzes the GTP-dependent ribosomal translocation step during translation elongation. During this step, the ribosome changes from the pre-translocational (PRE) to the post-translocational (POST) state as the newly formed A-site-bound peptidyl-tRNA and P-site-bound deacylated tRNA move to the P and E sites, respectively. Catalyzes the coordinated movement of the two tRNA molecules, the mRNA and conformational changes in the ribosome. The sequence is that of Elongation factor G from Rubrobacter xylanophilus (strain DSM 9941 / JCM 11954 / NBRC 16129 / PRD-1).